The primary structure comprises 419 residues: Inward rectifier potassium channel 16 (419 aa).

The Cytoplasmic portion of the chain corresponds to M1–D67. Residues T68–L94 form a helical membrane-spanning segment. The Extracellular portion of the chain corresponds to I95–S117. The helical; Pore-forming intramembrane region spans F118–Y134. The Selectivity filter signature appears at T131–Y136. The Extracellular segment spans residues G135 to C143. The chain crosses the membrane as a helical span at residues S144–K171. The Cytoplasmic portion of the chain corresponds to M172 to M419. Residues S358, S374, and S376 each carry the phosphoserine modification.

The protein belongs to the inward rectifier-type potassium channel (TC 1.A.2.1) family. KCNJ16 subfamily. It forms heteromeric channels with Kir4.1/KCNJ10; this interaction is required for KCNJ16 localization to the basolateral membrane in kidney cells. As a heteromer with KCNJ10, may interact with MAGI1; this interaction may facilitate KCNJ10/KCNJ16 potassium channel expression at the basolateral membrane in kidney cells. May form heteromers with Kir2.1/KCNJ2. Can form heteromeric channels with Kir4.2/KCNJ15. As to expression, abundantly expressed in the proximal and distal segments of the nephron.

Its subcellular location is the membrane. The protein resides in the basolateral cell membrane. The enzyme catalyses K(+)(in) = K(+)(out). Its activity is regulated as follows. Channel activity is strongly regulated by variations of cytosolic pH; channels are activated by alkaline and inhibited by acidic pH values. Activated by phosphatidylinositol 4,5 biphosphate (PtdIns(4,5)P2). In terms of biological role, inward rectifier potassium channels are characterized by a greater tendency to allow potassium to flow into the cell rather than out of it. Their voltage dependence is regulated by the concentration of extracellular potassium; as external potassium is raised, the voltage range of the channel opening shifts to more positive voltages. The inward rectification is mainly due to the blockage of outward current by internal magnesium. KCNJ16 may be involved in the regulation of fluid and pH balance. In the kidney, together with KCNJ10, mediates basolateral K(+) recycling in distal tubules; this process is critical for Na(+) reabsorption at the tubules. The protein is Inward rectifier potassium channel 16 (Kcnj16) of Mus musculus (Mouse).